A 314-amino-acid polypeptide reads, in one-letter code: MATFPVVDLSLVNGEERAATLEKINDACENWGFFELVNHGMSTELLDTVEKMTKDHYKKTMEQRFKEMVAAKGLDDVQSEIHDLDWESTFFLRHLPSSNISEIPDLEEEYRKTMKEFAVELEKLAEKLLDLLCENLGLEKGYLKKVFYGSKGPNFGTKVSNYPPCPKPDLIKGLRAHSDAGGIILLFQDDKVSGLQLLKDGEWVDVPPMHHSIVINLGDQIEVITNGKYKSVMHRVIAQSDGTRMSIASFYNPGNDSFISPAPAVLEKKTEDAPTYPKFVFDDYMKLYSGLKFQAKEPRFEAMKAKESTPVATA.

A Fe2OG dioxygenase domain is found at 153–253 (PNFGTKVSNY…RMSIASFYNP (101 aa)). Residues histidine 177, aspartate 179, and histidine 234 each contribute to the Fe cation site.

The protein belongs to the iron/ascorbate-dependent oxidoreductase family. As to quaternary structure, monomer. Fe cation serves as cofactor.

The enzyme catalyses 1-aminocyclopropane-1-carboxylate + L-ascorbate + O2 = ethene + L-dehydroascorbate + hydrogen cyanide + CO2 + 2 H2O. It functions in the pathway alkene biosynthesis; ethylene biosynthesis via S-adenosyl-L-methionine; ethylene from S-adenosyl-L-methionine: step 2/2. This is 1-aminocyclopropane-1-carboxylate oxidase 1 from Malus domestica (Apple).